The following is a 314-amino-acid chain: TPR repeat-containing protein MJ1345 (314 aa).

TPR repeat units lie at residues 12 to 45, 46 to 78, 80 to 112, 114 to 146, 147 to 180, 182 to 214, 215 to 248, 249 to 282, and 284 to 313; these read ESILWDEYFDALEKRNYEKALLLIDKILEVRESP, DVYVRKARILRTLGENDKALEYFDKALKLKPKY, LANFLKGALLVSLGKLEEAKEVFLKLCRLEKSD, PVKYVTAFILKKLGEYDYALKIIDKILKKYPKS, AIAWAEKGEILYREGKLKKSLECFDNALKINPKD, QSLLYKGEILFKLGRYGEALKCLKKVFERNNKD, IRALMYIIQILIYLGRLNQALEYTKKALKLNPDD, PLLYLYKGIILNKLGKYNEAIKYFDKVLEINPNI, and DAWNGKAIALEKLGKINEAIECYNRALDIY.

This is TPR repeat-containing protein MJ1345 from Methanocaldococcus jannaschii (strain ATCC 43067 / DSM 2661 / JAL-1 / JCM 10045 / NBRC 100440) (Methanococcus jannaschii).